The sequence spans 198 residues: MLYPTPIAKLIDSYSKLPGIGIKTATRLAFYTIGMSDDDVNEFAKNLLSAKRELTYCSVCGRLTDDDPCSICTDPTRDQTTILVLEDSRDVAAMENIQEYHGLYHVLHGLISPMNGISPDDINLKSLMTRLMDSEVSEVIVATNATADGEATSMYLSRLLKPAGIKVTRLARGLAVGADIEYADEVTLLRAIENRTEL.

A C4-type zinc finger spans residues 57–72 (CSVCGRLTDDDPCSIC). One can recognise a Toprim domain in the interval 80 to 175 (TTILVLEDSR…KVTRLARGLA (96 aa)).

It belongs to the RecR family.

May play a role in DNA repair. It seems to be involved in an RecBC-independent recombinational process of DNA repair. It may act with RecF and RecO. This Streptococcus pneumoniae (strain Hungary19A-6) protein is Recombination protein RecR.